A 113-amino-acid polypeptide reads, in one-letter code: Large ribosomal subunit protein uL22 (113 aa).

The protein belongs to the universal ribosomal protein uL22 family. As to quaternary structure, part of the 50S ribosomal subunit.

Functionally, this protein binds specifically to 23S rRNA; its binding is stimulated by other ribosomal proteins, e.g. L4, L17, and L20. It is important during the early stages of 50S assembly. It makes multiple contacts with different domains of the 23S rRNA in the assembled 50S subunit and ribosome. The globular domain of the protein is located near the polypeptide exit tunnel on the outside of the subunit, while an extended beta-hairpin is found that lines the wall of the exit tunnel in the center of the 70S ribosome. This Chloroflexus aggregans (strain MD-66 / DSM 9485) protein is Large ribosomal subunit protein uL22.